The following is a 152-amino-acid chain: Protein NrdI (152 aa).

It belongs to the NrdI family.

Probably involved in ribonucleotide reductase function. In Rhodococcus opacus (strain B4), this protein is Protein NrdI.